The chain runs to 723 residues: DNA-binding protein RFX2 (723 aa).

Residues 1–46 (MQNSEGGADSPASVALRPSAAAPPVPASPQRVLVQAASSNPKGAQM) form a disordered region. Over residues 10–20 (SPASVALRPSA) the composition is skewed to low complexity. A Phosphoserine modification is found at serine 28. The segment at residues 199 to 274 (HLQWLLDNYE…YHYYGIRLKP (76 aa)) is a DNA-binding region (RFX-type winged-helix). The tract at residues 292 to 332 (QQPMHQKPRYRPAQKTDSLGDSGSHSGLHSTPEQTMAVQSQ) is disordered. The segment covering 308 to 321 (DSLGDSGSHSGLHS) has biased composition (low complexity). A compositionally biased stretch (polar residues) spans 322-332 (TPEQTMAVQSQ). Serine 416 bears the Phosphoserine mark. Residues 688-723 (MGDEQRGSEAGPDARSLGEPLVKRERSDPNHSLQGI) form a disordered region.

The protein belongs to the RFX family. In terms of assembly, homodimer; probably only forms homodimers in testis. Heterodimer; heterodimerizes with RFX1 and RFX3.

The protein localises to the nucleus. Its subcellular location is the cytoplasm. Functionally, transcription factor that acts as a key regulator of spermatogenesis. Acts by regulating expression of genes required for the haploid phase during spermiogenesis, such as genes required for cilium assembly and function. Recognizes and binds the X-box, a regulatory motif with DNA sequence 5'-GTNRCC(0-3N)RGYAAC-3' present on promoters. Probably activates transcription of the testis-specific histone gene H1-6. The polypeptide is DNA-binding protein RFX2 (RFX2) (Homo sapiens (Human)).